Consider the following 2280-residue polypeptide: Metacaspase-3 (2280 aa).

7 disordered regions span residues 56-83, 202-284, 791-819, 931-954, 994-1015, 1278-1306, and 1469-1500; these read ILSKGKKNKNENIKKRINEKDNDTDRED, YSTE…THRG, YKNSMNSNDDIQNSNNNNNNNNNNNMVNN, DDNSVQDSFFSRTERSNSQNRYDK, SGKYQRNIPQNDDNDHNDDDSE, KTNNKTNSNYSSNNNNDNNNNNNNSNPFI, and KAPTNVKAPTNVKAPTNVNAPTNVNAPTNANA. Over residues 63 to 83 the composition is skewed to basic and acidic residues; it reads NKNENIKKRINEKDNDTDRED. 2 stretches are compositionally biased toward polar residues: residues 205–219 and 228–278; these read EHTQSIDNNNITSKR and DKAQ…NRKG. Low complexity-rich tracts occupy residues 793 to 819 and 931 to 941; these read NSMNSNDDIQNSNNNNNNNNNNNMVNN and DDNSVQDSFFS. Low complexity-rich tracts occupy residues 1278-1303 and 1482-1500; these read KTNNKTNSNYSSNNNNDNNNNNNNSN and APTNVNAPTNVNAPTNANA.

Belongs to the peptidase C14B family.

Its function is as follows. Protease that cleaves specifically after arginine or lysine residues. The sequence is that of Metacaspase-3 from Plasmodium falciparum (isolate 3D7).